The chain runs to 236 residues: Phosphoribosylaminoimidazole-succinocarboxamide synthase (236 aa).

The protein belongs to the SAICAR synthetase family.

It catalyses the reaction 5-amino-1-(5-phospho-D-ribosyl)imidazole-4-carboxylate + L-aspartate + ATP = (2S)-2-[5-amino-1-(5-phospho-beta-D-ribosyl)imidazole-4-carboxamido]succinate + ADP + phosphate + 2 H(+). Its pathway is purine metabolism; IMP biosynthesis via de novo pathway; 5-amino-1-(5-phospho-D-ribosyl)imidazole-4-carboxamide from 5-amino-1-(5-phospho-D-ribosyl)imidazole-4-carboxylate: step 1/2. This chain is Phosphoribosylaminoimidazole-succinocarboxamide synthase, found in Campylobacter concisus (strain 13826).